The primary structure comprises 210 residues: Protein RCR2 (210 aa).

Residues 41–61 (WIFFIFFIVALLILLFSTAKV) traverse the membrane as a helical segment. Positions 125 to 149 (PNGKTEYLAPPPLSEEQASSTDKDL) are disordered. A Phosphoserine modification is found at S161. The segment covering 175 to 199 (NNFVNGQSNRNEQHSPTVESSSFDV) has biased composition (polar residues). Residues 175–210 (NNFVNGQSNRNEQHSPTVESSSFDVNNAPARAKVSK) are disordered. Position 191 is a phosphothreonine (T191).

To yeast YBR005W.

The protein resides in the membrane. This Saccharomyces cerevisiae (strain ATCC 204508 / S288c) (Baker's yeast) protein is Protein RCR2 (RCR2).